The following is a 159-amino-acid chain: Sperm acrosome-associated protein 5 (159 aa).

The first 21 residues, 1 to 21 (MKAWGTVVVTLATLMVVTVDA), serve as a signal peptide directing secretion. The C-type lysozyme domain maps to 22–150 (KIYERCELAA…SEWLKGCDMH (129 aa)). Disulfide bonds link C27-C147, C51-C135, C85-C100, and C96-C114. E56 is a catalytic residue.

It belongs to the glycosyl hydrolase 22 family.

It localises to the secreted. It carries out the reaction Hydrolysis of (1-&gt;4)-beta-linkages between N-acetylmuramic acid and N-acetyl-D-glucosamine residues in a peptidoglycan and between N-acetyl-D-glucosamine residues in chitodextrins.. In Homo sapiens (Human), this protein is Sperm acrosome-associated protein 5 (SPACA5).